The sequence spans 742 residues: uncharacterized protein (742 aa).

The segment at 1–102 is disordered; sequence MMLLKRSNDN…FTQTKPNNTD (102 aa). A compositionally biased stretch (low complexity) spans 18-28; that stretch reads NRQNRQNNRQN. Basic and acidic residues predominate over residues 48–57; sequence RDSSRMDPVD. 2 stretches are compositionally biased toward polar residues: residues 60–69 and 77–99; these read TLISFTSGKP and HDTGTNKYSSSKLSETFTQTKPN.

This is an uncharacterized protein from Acanthamoeba polyphaga mimivirus (APMV).